A 117-amino-acid chain; its full sequence is Ribosome maturation factor RimP (117 aa).

It belongs to the RimP family.

The protein resides in the cytoplasm. Functionally, required for maturation of 30S ribosomal subunits. The sequence is that of Ribosome maturation factor RimP from Rickettsia prowazekii (strain Madrid E).